A 319-amino-acid polypeptide reads, in one-letter code: HPr kinase/phosphorylase (319 aa).

Catalysis depends on residues His-146 and Lys-167. 161 to 168 (GESGLGKS) is an ATP binding site. Ser-168 is a Mg(2+) binding site. The Proton acceptor; for phosphorylation activity. Proton donor; for dephosphorylation activity role is filled by Asp-185. Residues 209–218 (LEVRGIGLLD) are important for the catalytic mechanism of both phosphorylation and dephosphorylation. Position 210 (Glu-210) interacts with Mg(2+). Residue Arg-252 is part of the active site. The important for the catalytic mechanism of dephosphorylation stretch occupies residues 273-278 (QVVAGR).

It belongs to the HPrK/P family. As to quaternary structure, homohexamer. It depends on Mg(2+) as a cofactor.

It catalyses the reaction [HPr protein]-L-serine + ATP = [HPr protein]-O-phospho-L-serine + ADP + H(+). The catalysed reaction is [HPr protein]-O-phospho-L-serine + phosphate + H(+) = [HPr protein]-L-serine + diphosphate. Catalyzes the ATP- as well as the pyrophosphate-dependent phosphorylation of a specific serine residue in HPr, a phosphocarrier protein of the phosphoenolpyruvate-dependent sugar phosphotransferase system (PTS). HprK/P also catalyzes the pyrophosphate-producing, inorganic phosphate-dependent dephosphorylation (phosphorolysis) of seryl-phosphorylated HPr (P-Ser-HPr). This is HPr kinase/phosphorylase from Variovorax paradoxus (strain S110).